Here is a 1447-residue protein sequence, read N- to C-terminus: Inositol 1,4,5-triphosphate receptor associated 2 (1447 aa).

Residues 1–1388 (MDVGVTPRRH…RPAVSRGARG (1388 aa)) lie on the Cytoplasmic side of the membrane. Disordered stretches follow at residues 64 to 96 (VRPD…PRAP) and 420 to 439 (LSLT…RKQM). Over residues 71-92 (SASSAGMLTPTASPGPGSSCNT) the composition is skewed to polar residues. 2 coiled-coil regions span residues 354-518 (FCVA…EYSS) and 665-731 (TDWI…DNRE). A compositionally biased stretch (low complexity) spans 420 to 436 (LSLTSSEESRAQAAAQR). 5 disordered regions span residues 790 to 828 (KQEE…EEPQ), 841 to 860 (KKSE…GEQR), 991 to 1132 (PVAE…SPSD), 1267 to 1289 (NERS…TTSN), and 1355 to 1379 (DEPT…MEGR). The span at 800–812 (VSDKEKITAKSEG) shows a compositional bias: basic and acidic residues. Residues 1021–1035 (KKTVVTSDSNSTGSA) are compositionally biased toward polar residues. 2 stretches are compositionally biased toward basic and acidic residues: residues 1037–1049 (SLKD…KDMT) and 1080–1096 (KKEM…KAQE). Residues 1076-1265 (RNKLKKEMSS…ELLELRENLT (190 aa)) form a necessary for spindle and spindle pole localization region. Polar residues predominate over residues 1110–1119 (TSVSSENASD). Over residues 1120–1132 (STKDDKNSLSPSD) the composition is skewed to basic and acidic residues. Polar residues predominate over residues 1359–1371 (LMNSPTPSPTDNA). The interval 1388–1447 (GIWIWVALFVVLAVLLALLASLMLQPAVDAAPVGTGDSWMTIQQLLWPYTGLRHNGQPPV) is necessary for nuclear membrane localization. Residues 1389–1409 (IWIWVALFVVLAVLLALLASL) form a helical; Anchor for type IV membrane protein membrane-spanning segment. Residues 1410–1447 (MLQPAVDAAPVGTGDSWMTIQQLLWPYTGLRHNGQPPV) are Lumenal-facing.

This sequence belongs to the IRAG2 family.

The protein localises to the endoplasmic reticulum membrane. It localises to the nucleus envelope. It is found in the cytoplasm. The protein resides in the cytoskeleton. Its subcellular location is the microtubule organizing center. The protein localises to the centrosome. It localises to the spindle pole. It is found in the chromosome. Functionally, a maternally expressed membrane and cytoskeletal linker protein, which is essential for attachment of the centrosome to the male pronucleus. Promotes male and female pronucleus congression and subsequent fusion after fertilization. Congression is mediated by the sperm aster microtubules. This Danio rerio (Zebrafish) protein is Inositol 1,4,5-triphosphate receptor associated 2 (irag2).